We begin with the raw amino-acid sequence, 337 residues long: UDP-3-O-acylglucosamine N-acyltransferase (337 aa).

The active-site Proton acceptor is the His238.

It belongs to the transferase hexapeptide repeat family. LpxD subfamily. As to quaternary structure, homotrimer.

The catalysed reaction is a UDP-3-O-[(3R)-3-hydroxyacyl]-alpha-D-glucosamine + a (3R)-hydroxyacyl-[ACP] = a UDP-2-N,3-O-bis[(3R)-3-hydroxyacyl]-alpha-D-glucosamine + holo-[ACP] + H(+). It participates in bacterial outer membrane biogenesis; LPS lipid A biosynthesis. Functionally, catalyzes the N-acylation of UDP-3-O-acylglucosamine using 3-hydroxyacyl-ACP as the acyl donor. Is involved in the biosynthesis of lipid A, a phosphorylated glycolipid that anchors the lipopolysaccharide to the outer membrane of the cell. The protein is UDP-3-O-acylglucosamine N-acyltransferase of Xanthomonas axonopodis pv. citri (strain 306).